The following is a 393-amino-acid chain: Protein TsgA (393 aa).

A run of 12 helical transmembrane segments spans residues 11 to 31, 51 to 71, 78 to 98, 101 to 121, 134 to 154, 162 to 182, 206 to 226, 245 to 265, 273 to 293, 298 to 318, 332 to 352, and 361 to 381; these read WISF…GMVM, FLNA…EIVP, FGFI…SLAL, AAMF…TFLI, LLFT…VAAF, WYWV…LTFG, IGVL…LGFI, ALVS…SFIL, ILTV…TGTQ, WFIL…ITLG, FILT…GPIV, and LLTA…LGFV.

This sequence belongs to the major facilitator superfamily. TsgA family.

The protein resides in the cell inner membrane. The chain is Protein TsgA from Salmonella arizonae (strain ATCC BAA-731 / CDC346-86 / RSK2980).